The chain runs to 859 residues: Low-density lipoprotein receptor-related protein 12 (859 aa).

An N-terminal signal peptide occupies residues 1-32 (MACRWSTKESPRWRSALLLLFLAGVYGNGALA). The Extracellular portion of the chain corresponds to 33–492 (EHSENVHISG…ENCPVIVPTR (460 aa)). Disulfide bonds link cysteine 47–cysteine 76 and cysteine 103–cysteine 122. Positions 47-159 (CGETPEQIRA…KGFRLAYFSG (113 aa)) constitute a CUB 1 domain. N-linked (GlcNAc...) asparagine glycosylation occurs at asparagine 75. Asparagine 146 carries an N-linked (GlcNAc...) asparagine glycan. LDL-receptor class A domains follow at residues 165 to 201 (NCACDQFRCGNGKCIPEAWKCNNMDECGDSSDEEICA) and 214 to 255 (PCAY…IDCD). 7 disulfide bridges follow: cysteine 166–cysteine 178, cysteine 173–cysteine 191, cysteine 185–cysteine 200, cysteine 215–cysteine 232, cysteine 222–cysteine 245, cysteine 239–cysteine 254, and cysteine 259–cysteine 285. In terms of domain architecture, CUB 2 spans 259 to 372 (CGQWLKYFYG…RGFNATYQVD (114 aa)). Residues asparagine 284 and asparagine 366 are each glycosylated (N-linked (GlcNAc...) asparagine). 3 LDL-receptor class A domains span residues 374–411 (FCLPWEIPCGGNWGCYTEQQRCDGYWHCPNGRDETNCT), 412–449 (MCQKEEFPCSRNGVCYPRSDRCNYQNHCPNGSDEKNCF), and 450–486 (FCQPGNFHCKNNRCVFESWVCDSQDDCGDGSDEENCP). 9 disulfide bridges follow: cysteine 375/cysteine 388, cysteine 382/cysteine 401, cysteine 395/cysteine 410, cysteine 413/cysteine 426, cysteine 420/cysteine 439, cysteine 433/cysteine 448, cysteine 451/cysteine 463, cysteine 458/cysteine 476, and cysteine 470/cysteine 485. An N-linked (GlcNAc...) asparagine glycan is attached at asparagine 409. The N-linked (GlcNAc...) asparagine glycan is linked to asparagine 441. Residues 493-513 (VITAAVIGSLICGLLLVIALG) form a helical membrane-spanning segment. At 514-859 (CTCKLYSLRM…TSDDEALLLC (346 aa)) the chain is on the cytoplasmic side. 4 disordered regions span residues 623 to 678 (ADGD…LPQK), 693 to 723 (ASSSTQSTRGGHADNGRDVTSVEPPSVSPAR), 748 to 770 (SSLSQNQSPLRQLDNGVSGREDD), and 801 to 823 (DQGQGLRQPYNATNPGVRPSNRD). Composition is skewed to polar residues over residues 748-757 (SSLSQNQSPL) and 801-814 (DQGQGLRQPYNATN).

It belongs to the LDLR family. May interact with RACK1, ZFYVE9 and NMRK2. In terms of tissue distribution, widely expressed in heart, skeletal muscle, brain, lung, placenta and pancreas, but not in tissues consisting of a large number of epithelial cells, such as liver and kidney. Expressed at very low levels in a number of tumor-derived cell lines.

It localises to the membrane. The protein localises to the coated pit. Probable receptor, which may be involved in the internalization of lipophilic molecules and/or signal transduction. May act as a tumor suppressor. The protein is Low-density lipoprotein receptor-related protein 12 (LRP12) of Homo sapiens (Human).